We begin with the raw amino-acid sequence, 379 residues long: C-C chemokine receptor type 7 (379 aa).

The N-terminal stretch at 1 to 24 is a signal peptide; sequence MDLGKPMKNVLVVALLVIFQVCLC. At 25-59 the chain is on the extracellular side; sequence QDEVTDNYIGDNTTVDYTLYESVCFKKDVRNFKAW. Asn-36 carries N-linked (GlcNAc...) asparagine glycosylation. A helical membrane pass occupies residues 60–86; that stretch reads FLPIMYSIICFVGLLGNGLVMLTYIYF. Topologically, residues 87-95 are cytoplasmic; the sequence is KRLKTMTDT. The chain crosses the membrane as a helical span at residues 96-116; sequence YLLNLALADILFLLTLPFWAY. The Extracellular portion of the chain corresponds to 117-130; it reads SAAKSWVFGVHVCK. Residues Cys-129 and Cys-210 are joined by a disulfide bond. A helical transmembrane segment spans residues 131-152; the sequence is LIFGIYKISFFSGMLLLLCISI. Over 153-170 the chain is Cytoplasmic; it reads DRYVAIVQAVSAHRHRAR. A helical transmembrane segment spans residues 171–191; sequence VLLISKLSCLGIWMLAIVLST. At 192-219 the chain is on the extracellular side; the sequence is PEVMYSGIQKSSSEQALRCSLVTEHVEA. A helical membrane pass occupies residues 220–247; the sequence is LITIQVAQMVVGFLIPLMAMSFCYLVII. Over 248 to 263 the chain is Cytoplasmic; that stretch reads RTLLQARNFERNKAIK. A helical membrane pass occupies residues 264–289; it reads VIIAVVVVFVAFQLPYNGVVLAHTVA. At 290 to 314 the chain is on the extracellular side; that stretch reads NFNITSGTSCELSKQLNIAYDVTYS. N-linked (GlcNAc...) asparagine glycosylation is present at Asn-292. The chain crosses the membrane as a helical span at residues 315 to 332; it reads LACVRCCVNPFLYAFIGV. Topologically, residues 333 to 379 are cytoplasmic; the sequence is KFRSDLFKLFKDLGCLSQEQLRQWSFCRHTRRSSMSVEAETTTTFSP.

The protein belongs to the G-protein coupled receptor 1 family.

Its subcellular location is the cell membrane. Receptor for the MIP-3-beta chemokine. This Bos taurus (Bovine) protein is C-C chemokine receptor type 7 (CCR7).